The primary structure comprises 564 residues: Cytochrome c oxidase subunit 1 (564 aa).

Residues 1–23 (MTAVAPRLENYAEPTRPAPTGGA) form a disordered region. 7 helical membrane passes run 43 to 63 (MMYIVMSFVWFFVGGLMALLI), 83 to 103 (LFTLHGTIMLLAFGTPVVWGF), 122 to 142 (LNAFGFWITQIGVVAMLAGFL), 171 to 191 (FWIIGVGATGVGTIASAVNMI), 214 to 234 (IFVASVIVLLIFPLLTAAALG), 259 to 279 (LFWFFGHPEVYVLALPFFGIV), and 292 to 312 (FGYIGLVFATLSIGMLSMAVW). Position 87 (His-87) interacts with Fe(II)-heme a. Positions 265 and 269 each coordinate Cu cation. The segment at residues 265–269 (HPEVY) is a cross-link (1'-histidyl-3'-tyrosine (His-Tyr)). 2 residues coordinate Cu cation: His-314 and His-315. A run of 2 helical transmembrane segments spans residues 316 to 336 (MFVTGAILLPFFSFMTFLISV) and 360 to 380 (MTWTMGFLVTFLFGGLTGIML). His-398 is a heme a3 binding site. The next 3 helical transmembrane spans lie at 399–419 (FHYTLFGTVVFASYAGVYFWF), 434–454 (IHFWITFVGFHGTFLVQHWVG), and 477–497 (ISTVFSFLLGVSVIPFIWNVF). His-400 contacts Fe(II)-heme a.

It belongs to the heme-copper respiratory oxidase family. Associates with subunits II, III and IV to form cytochrome c oxidase. Requires Cu(2+) as cofactor. Heme serves as cofactor.

It localises to the cell membrane. It catalyses the reaction 4 Fe(II)-[cytochrome c] + O2 + 8 H(+)(in) = 4 Fe(III)-[cytochrome c] + 2 H2O + 4 H(+)(out). The protein operates within energy metabolism; oxidative phosphorylation. Functionally, cytochrome c oxidase is the component of the respiratory chain that catalyzes the reduction of oxygen to water. Subunits 1-3 form the functional core of the enzyme complex. CO I is the catalytic subunit of the enzyme. Electrons originating in cytochrome c are transferred via the copper A center of subunit 2 and heme A of subunit 1 to the bimetallic center formed by heme A3 and copper B. The chain is Cytochrome c oxidase subunit 1 (ctaD) from Corynebacterium diphtheriae (strain ATCC 700971 / NCTC 13129 / Biotype gravis).